We begin with the raw amino-acid sequence, 205 residues long: Urease accessory protein UreG (205 aa).

11-18 (GPVGSGKT) provides a ligand contact to GTP.

This sequence belongs to the SIMIBI class G3E GTPase family. UreG subfamily. In terms of assembly, homodimer. UreD, UreF and UreG form a complex that acts as a GTP-hydrolysis-dependent molecular chaperone, activating the urease apoprotein by helping to assemble the nickel containing metallocenter of UreC. The UreE protein probably delivers the nickel.

Its subcellular location is the cytoplasm. In terms of biological role, facilitates the functional incorporation of the urease nickel metallocenter. This process requires GTP hydrolysis, probably effectuated by UreG. The protein is Urease accessory protein UreG of Prochlorococcus marinus (strain NATL1A).